The following is a 171-amino-acid chain: Protein GrpE (171 aa).

A disordered region spans residues 1–22 (MNHEHPDIESQQSAADAAAAAG).

This sequence belongs to the GrpE family. As to quaternary structure, homodimer.

The protein resides in the cytoplasm. Its function is as follows. Participates actively in the response to hyperosmotic and heat shock by preventing the aggregation of stress-denatured proteins, in association with DnaK and GrpE. It is the nucleotide exchange factor for DnaK and may function as a thermosensor. Unfolded proteins bind initially to DnaJ; upon interaction with the DnaJ-bound protein, DnaK hydrolyzes its bound ATP, resulting in the formation of a stable complex. GrpE releases ADP from DnaK; ATP binding to DnaK triggers the release of the substrate protein, thus completing the reaction cycle. Several rounds of ATP-dependent interactions between DnaJ, DnaK and GrpE are required for fully efficient folding. The sequence is that of Protein GrpE from Stenotrophomonas maltophilia (strain R551-3).